Reading from the N-terminus, the 112-residue chain is MLQTKNSQEIKLNWYETVYLIKSDLNEDRTLCIINEYKSMLTNGGAKNIILQHRGRRHLSYSIKDYRDGIYVQVNYEGNGKLVQSFEKSLRFDENIIRYLTNKQNKDNKIEG.

Belongs to the bacterial ribosomal protein bS6 family.

Its subcellular location is the plastid. It is found in the chloroplast. Functionally, binds together with bS18 to 16S ribosomal RNA. In Porphyra purpurea (Red seaweed), this protein is Small ribosomal subunit protein bS6c (rps6).